Here is a 742-residue protein sequence, read N- to C-terminus: Phosphoribosylformylglycinamidine synthase subunit PurL (742 aa).

The active site involves H54. Y57 and K96 together coordinate ATP. E98 serves as a coordination point for Mg(2+). Substrate contacts are provided by residues 99–102 and R121; that span reads SHNH. Catalysis depends on H100, which acts as the Proton acceptor. D122 contacts Mg(2+). Substrate is bound at residue Q245. D273 contacts Mg(2+). Residue 317 to 319 participates in substrate binding; it reads ESQ. 2 residues coordinate ATP: D500 and G537. N538 contacts Mg(2+). S540 contributes to the substrate binding site.

This sequence belongs to the FGAMS family. Monomer. Part of the FGAM synthase complex composed of 1 PurL, 1 PurQ and 2 PurS subunits.

It is found in the cytoplasm. It carries out the reaction N(2)-formyl-N(1)-(5-phospho-beta-D-ribosyl)glycinamide + L-glutamine + ATP + H2O = 2-formamido-N(1)-(5-O-phospho-beta-D-ribosyl)acetamidine + L-glutamate + ADP + phosphate + H(+). Its pathway is purine metabolism; IMP biosynthesis via de novo pathway; 5-amino-1-(5-phospho-D-ribosyl)imidazole from N(2)-formyl-N(1)-(5-phospho-D-ribosyl)glycinamide: step 1/2. Part of the phosphoribosylformylglycinamidine synthase complex involved in the purines biosynthetic pathway. Catalyzes the ATP-dependent conversion of formylglycinamide ribonucleotide (FGAR) and glutamine to yield formylglycinamidine ribonucleotide (FGAM) and glutamate. The FGAM synthase complex is composed of three subunits. PurQ produces an ammonia molecule by converting glutamine to glutamate. PurL transfers the ammonia molecule to FGAR to form FGAM in an ATP-dependent manner. PurS interacts with PurQ and PurL and is thought to assist in the transfer of the ammonia molecule from PurQ to PurL. The sequence is that of Phosphoribosylformylglycinamidine synthase subunit PurL from Geobacillus kaustophilus (strain HTA426).